A 415-amino-acid polypeptide reads, in one-letter code: Elongation factor Tu, chloroplastic (415 aa).

The region spanning K13 to R217 is the tr-type G domain. Residues G22–T29 are G1. G22–T29 serves as a coordination point for GTP. T29 contributes to the Mg(2+) binding site. Positions N63–Y67 are G2. Positions D84 to G87 are G3. Residues D84–H88 and N139–D142 contribute to the GTP site. The segment at N139 to D142 is G4. The segment at S177–L179 is G5.

Belongs to the TRAFAC class translation factor GTPase superfamily. Classic translation factor GTPase family. EF-Tu/EF-1A subfamily.

The protein localises to the plastid. It is found in the chloroplast. The catalysed reaction is GTP + H2O = GDP + phosphate + H(+). GTP hydrolase that promotes the GTP-dependent binding of aminoacyl-tRNA to the A-site of ribosomes during protein biosynthesis. The polypeptide is Elongation factor Tu, chloroplastic (tufA) (Coleochaete orbicularis (Charophycean green alga)).